The chain runs to 370 residues: Peptidyl-prolyl cis-trans isomerase D (370 aa).

Serine 5 carries the post-translational modification Phosphoserine. The region spanning 19–183 is the PPIase cyclophilin-type domain; that stretch reads FFDVDIGGER…KLCVIAECGE (165 aa). Lysine 171 carries the N6-acetyllysine modification. Residues 185 to 215 form a chaperone activity region; the sequence is KEGDDWGIFPKDGSGDSHPDFPEDADIDLKD. At serine 198 the chain carries Phosphoserine. Positions 214 to 370 are interaction with HSP90AB1; sequence KDVDKILLIS…EKAVYAKMFA (157 aa). 3 TPR repeats span residues 223–256, 273–306, and 307–340; these read SEDL…VDSS, LSCV…DPSN, and TKAL…APGD.

It belongs to the cyclophilin-type PPIase family. PPIase D subfamily. Identified in ESR1 or NR3C1/GCR steroid receptor-chaperone complexes. Found in HSP90 chaperone complexes with kinase clients LCK or EIF2AK1. Two monomers associate with one HSP90 homodimer. Interacts with HSP90AA1. Interacts with HSP90AB1; PPID and FKBP4 compete for binding to HSP90AB1 and the interaction is mutually exclusive with the PPID:HSPA8 interaction. Interacts with HSPA8; PPID and STIP1 but not FKBP4 compete for binding to HSPA8 and the interaction is mutually exclusive with the PPID:HSP90AB1 interaction. Interacts with S100A1 and S100A2; the interactions dissociate the PPID:HSP90AA1 interaction. Interacts with S100A6. Interacts with MYB, ILF2, XRCC6, RACK1 and RPS3. Interacts with cytoplasmic dynein 1 intermediate chain (DYNC1I1 or DYNC1I2).

The protein localises to the cytoplasm. It is found in the nucleus. The protein resides in the nucleolus. It localises to the nucleoplasm. It carries out the reaction [protein]-peptidylproline (omega=180) = [protein]-peptidylproline (omega=0). Its activity is regulated as follows. Less sensitive to inhibition by cyclosporin A than is CYP-18. PPIase that catalyzes the cis-trans isomerization of proline imidic peptide bonds in oligopeptides and may therefore assist protein folding. Proposed to act as a co-chaperone in HSP90 complexes such as in unligated steroid receptors heterocomplexes. Different co-chaperones seem to compete for association with HSP90 thus establishing distinct HSP90-co-chaperone-receptor complexes with the potential to exert tissue-specific receptor activity control. May have a preference for estrogen receptor complexes and is not found in glucocorticoid receptor complexes. May be involved in cytoplasmic dynein-dependent movement of the receptor from the cytoplasm to the nucleus. May regulate MYB by inhibiting its DNA-binding activity. Involved in regulation of AHR signaling by promoting the formation of the AHR:ARNT dimer; the function is independent of HSP90 but requires the chaperone activity region. Involved in regulation of UV radiation-induced apoptosis. This chain is Peptidyl-prolyl cis-trans isomerase D, found in Mus musculus (Mouse).